A 142-amino-acid chain; its full sequence is Large ribosomal subunit protein uL13 (142 aa).

The protein belongs to the universal ribosomal protein uL13 family. As to quaternary structure, part of the 50S ribosomal subunit.

Functionally, this protein is one of the early assembly proteins of the 50S ribosomal subunit, although it is not seen to bind rRNA by itself. It is important during the early stages of 50S assembly. The chain is Large ribosomal subunit protein uL13 from Yersinia enterocolitica serotype O:8 / biotype 1B (strain NCTC 13174 / 8081).